A 174-amino-acid chain; its full sequence is UPF0340 protein SH0921 (174 aa).

Belongs to the UPF0340 family.

In Staphylococcus haemolyticus (strain JCSC1435), this protein is UPF0340 protein SH0921.